The sequence spans 314 residues: N-myc-interactor (314 aa).

Residues 1–24 (MDADKDNIKQACDERSAEMDDMRG) form a disordered region. Serine 16 carries the post-translational modification Phosphoserine. A coiled-coil region spans residues 31 to 65 (VHEIMSENKELDEEIKKLEAELQSDAREFQIKENV). NID domains are found at residues 104–193 (GQAL…GEVE) and 202–293 (RSAV…EVEV).

This sequence belongs to the NMI family. As to quaternary structure, interacts with MYCN and MYC, as well as with other transcription factors with a Zip, HLH or a HLH-Zip motif. Interacts with all STAT proteins except STAT2. Interacts with IRF7, the interaction is direct and leads to the inhibition of IRF7-mediated type I IFN production. Interacts (via coiled-coil domain) with TRIM21 (via the SPRY domain); the interaction leads to 'Lys-63'-linked ubiquitination of NMI. Interacts with IFI35; the interaction is direct and is facilitated by TRIM21. Interacts with TLR4; the interaction is direct and leads to NF-kappa-B activation. Post-translationally, may be ubiquitinated. Expressed in macrophages.

It localises to the cytoplasm. Its subcellular location is the nucleus. The protein localises to the secreted. Its function is as follows. Acts as a signaling pathway regulator involved in innate immune system response. In response to interleukin 2/IL2 and interferon IFN-gamma/IFNG, interacts with signal transducer and activator of transcription/STAT which activate the transcription of downstream genes involved in a multitude of signals for development and homeostasis. Enhances the recruitment of CBP/p300 coactivators to STAT1 and STAT5, resulting in increased STAT1- and STAT5-dependent transcription. In response to interferon IFN-alpha, associates in a complex with transcriptional regulator IFI35 to regulate immune response; the complex formation prevents proteasome-mediated degradation of IFI35. In complex with IFI35, negatively regulates nuclear factor NF-kappa-B signaling by inhibiting the nuclear translocation, activation and transcription of NF-kappa-B subunit p65/RELA, resulting in the inhibition of endothelial cell proliferation, migration and re-endothelialization of injured arteries. Negatively regulates virus-triggered type I interferon/IFN production by inducing proteosome-dependent degradation of IRF7, a transcriptional regulator of type I IFN, thereby interfering with cellular antiviral responses. Beside its role as an intracellular signaling pathway regulator, also functions extracellularly as damage-associated molecular patterns (DAMPs) to promote inflammation, when actively released by macrophage to the extracellular space during cell injury or pathogen invasion. Macrophage-secreted NMI activates NF-kappa-B signaling in adjacent macrophages through Toll-like receptor 4/TLR4 binding and activation, thereby inducing NF-kappa-B translocation from the cytoplasm into the nucleus which promotes the release of pro-inflammatory cytokines. In Mus musculus (Mouse), this protein is N-myc-interactor.